Reading from the N-terminus, the 248-residue chain is Cutinase (248 aa).

Residues 1 to 17 (MRSLAILTTLLAGHAFA) form the signal peptide. The propeptide occupies 18–28 (YPKPAPQSVNR). Residues 31–70 (WPSINEFLSELAKVMPIGDTITAACDLISDGEDAAASLFG) are lid covering the active site of the uncomplexed enzyme. Intrachain disulfides connect cysteine 55/cysteine 91 and cysteine 79/cysteine 153. Serine 164 functions as the Nucleophile in the catalytic mechanism. An intrachain disulfide couples cysteine 212 to cysteine 219. Aspartate 216 is a catalytic residue. The Proton donor/acceptor role is filled by histidine 229.

The protein belongs to the cutinase family.

The protein localises to the secreted. The catalysed reaction is cutin + H2O = cutin monomers.. With respect to regulation, weakly inhibited by n-undecyl phosphonate (C11Y4). Activity unaffected by paraoxon. Catalyzes the hydrolysis of complex carboxylic polyesters found in the cell wall of plants. Degrades cutin, a macromolecule that forms the structure of the plant cuticle. This chain is Cutinase, found in Hypocrea jecorina (strain QM6a) (Trichoderma reesei).